The primary structure comprises 99 residues: UPF0751 protein BCAH820_B0138 (99 aa).

The protein belongs to the UPF0751 family.

The sequence is that of UPF0751 protein BCAH820_B0138 from Bacillus cereus (strain AH820).